The primary structure comprises 628 residues: Chaperone protein HtpG (628 aa).

Positions 1 to 337 (MSEKKYTFET…SADLPLNVSR (337 aa)) are a; substrate-binding. A b region spans residues 338 to 554 (EILQHNKVID…DYGMSLHMQK (217 aa)). The segment at 555-628 (MMEEAGQSFM…FVKLVNKYIR (74 aa)) is c.

Belongs to the heat shock protein 90 family. Homodimer.

It is found in the cytoplasm. In terms of biological role, molecular chaperone. Has ATPase activity. In Francisella tularensis subsp. tularensis (strain FSC 198), this protein is Chaperone protein HtpG.